The sequence spans 1196 residues: uncharacterized protein (1196 aa).

Residues 27–47 (ILLLLGSFILLNVWINVVTLL) form a helical membrane-spanning segment. 7 disordered regions span residues 150–345 (GGGE…PQAH), 367–402 (SSVP…ASAP), 669–762 (TQDS…QKNT), 775–806 (CLTQ…DSGI), 826–877 (QATD…QDSE), 960–1009 (YRSS…GPYK), and 1168–1196 (KCEA…DIRM). The segment covering 157–177 (VTASKAQASLLSRPETSSQFP) has biased composition (polar residues). Low complexity-rich tracts occupy residues 212-227 (HSPT…HPWT) and 253-279 (THSQ…TPAH). Residues 299–321 (HTSAQAQTHSPPHTPEYTHSQAH) show a composition bias toward polar residues. Pro residues predominate over residues 391 to 402 (APTPAPVPASAP). 4 stretches are compositionally biased toward polar residues: residues 733–742 (YLCQNPSPSQ), 750–762 (SGIT…QKNT), 787–804 (PFTQ…TQDS), and 826–849 (QATD…TGNV). Residues 962–971 (SSEHSQDSNL) show a composition bias toward basic and acidic residues.

The protein localises to the membrane. This is an uncharacterized protein from Homo sapiens (Human).